A 322-amino-acid chain; its full sequence is Pyrroline-5-carboxylate reductase (322 aa).

Transmembrane regions (helical) follow at residues 9-29 and 117-137; these read YPNV…VGLL and ILIS…LHFW. The disordered stretch occupies residues 302 to 322; that stretch reads LSQSAGSHGEDNTTDSKTSRA. N-linked (GlcNAc...) asparagine glycosylation is present at N313.

The protein belongs to the pyrroline-5-carboxylate reductase family.

It is found in the membrane. The catalysed reaction is L-proline + NADP(+) = (S)-1-pyrroline-5-carboxylate + NADPH + 2 H(+). The enzyme catalyses L-proline + NAD(+) = (S)-1-pyrroline-5-carboxylate + NADH + 2 H(+). The protein operates within alkaloid biosynthesis. Its function is as follows. Pyrroline-5-carboxylate reductase; part of the gene cluster that mediates the biosynthesis of paraherquamide, a fungal indole alkaloid that belongs to a family of natural products containing a characteristic bicyclo[2.2.2]diazaoctane core. The first steps in the biosynthesis of paraherquamide is the production of the beta-methyl-proline precursor from L-isoleucine. They require oxidation of a terminally hydroxylated L-isoleucine to the corresponding aldehyde by enzymes which have still to be identified. Spontaneous cyclization and dehydration would yield the 4-methyl pyrolline-5-carboxylic acid, which is then reduced by the pyrroline-5-carboxylate reductase phqD leading to the beta-methyl-proline precursor. The next step of paraherquamide biosynthesis involves coupling of beta-methyl-proline and L-tryptophan by the bimodular NRPS phqB, to produce a monooxopiperazine intermediate. The reductase (R) domain of phqB utilizes NADPH for hydride transfer to reduce the thioester bond of the T domain-tethered linear dipeptide to a hemithioaminal intermediate, which spontaneously cleaves the C-S bond to release the aldehyde product. This compound undergoes spontaneous cyclization and dehydration to give a dienamine which is reverse prenylated at C-2 by the reverse prenyltransferase phqJ. The other prenyltransferase present in the cluster, phqI may be a redundant gene in the pathway. During biosynthetic assembly, the key step to produce the polycyclic core is catalyzed by the bifunctional reductase and intramolecular [4+2] Diels-Alderase, phqE, resulting in formation of the [2.2.2] diazaoctane intermediate preparaherquamide. Following formation of preparaherquamide, an indole 2,3-epoxidation-initiated pinacol-like rearrangement is catalyzed by the phqK FAD-dependent monooxygenase. The prenyltransferase phqA, the cytochrome P450 monooxygenase phqL, and the FAD-linked oxidoreductase phqH (or the cytochrome P450 monooxygenase phqM), are proposed to be involved in the formation of the pyran ring. The FAD-dependent monooxygenase phqK is likely responsible for generation of the spiro-oxindole, and the N-methylation is likely mediated by the phqN methyltransferase leading to the isolable natural product paraherquamide F. However, the order of these biosynthetic steps has still to be determined. In late-stage paraherquamide biosynthesis, the third P450 monooxygenase, phqO, is probably responsible for the C-14 hydroxylation, transforming paraherquamide F to paraherquamide G, and paraherquamide E to the final product paraherquamide A. The expansion from the 6-membered ring pyran (in paraherquamides F and G) to the 7-membered dioxepin ring (in paraherquamides A and E) represents a poorly understood but intriguing process that probably involves the 2-oxoglutarate-dependent dioxygenase phqC. Finally, the remaining members of the paraherquamide cluster, including phqI as well as phqM (or phqH), do not have a clearly prescribed role and appear to be redundant. This chain is Pyrroline-5-carboxylate reductase, found in Penicillium fellutanum.